The sequence spans 658 residues: UvrABC system protein B (658 aa).

Residues 25–416 (QFIHNGAQYS…QEHIAEQIIR (392 aa)) form the Helicase ATP-binding domain. An ATP-binding site is contributed by 38 to 45 (GVTGSGKT). The short motif at 91 to 114 (HFDYYQPEAYIPRRDLFIEKDSSI) is the Beta-hairpin element. Residues 433–607 (AVLDLYDEIK…ELKIESSGLS (175 aa)) enclose the Helicase C-terminal domain. The UVR domain maps to 623–658 (ESIIKELNIKMHQAAKALEFEEAARLRDEIARIRTM).

The protein belongs to the UvrB family. Forms a heterotetramer with UvrA during the search for lesions. Interacts with UvrC in an incision complex.

Its subcellular location is the cytoplasm. The UvrABC repair system catalyzes the recognition and processing of DNA lesions. A damage recognition complex composed of 2 UvrA and 2 UvrB subunits scans DNA for abnormalities. Upon binding of the UvrA(2)B(2) complex to a putative damaged site, the DNA wraps around one UvrB monomer. DNA wrap is dependent on ATP binding by UvrB and probably causes local melting of the DNA helix, facilitating insertion of UvrB beta-hairpin between the DNA strands. Then UvrB probes one DNA strand for the presence of a lesion. If a lesion is found the UvrA subunits dissociate and the UvrB-DNA preincision complex is formed. This complex is subsequently bound by UvrC and the second UvrB is released. If no lesion is found, the DNA wraps around the other UvrB subunit that will check the other stand for damage. The sequence is that of UvrABC system protein B from Helicobacter hepaticus (strain ATCC 51449 / 3B1).